We begin with the raw amino-acid sequence, 515 residues long: Bifunctional purine biosynthesis protein PurH (515 aa).

One can recognise an MGS-like domain in the interval 1-145; the sequence is MTKRVLISVS…KNHASVTVVV (145 aa).

This sequence belongs to the PurH family.

The enzyme catalyses (6R)-10-formyltetrahydrofolate + 5-amino-1-(5-phospho-beta-D-ribosyl)imidazole-4-carboxamide = 5-formamido-1-(5-phospho-D-ribosyl)imidazole-4-carboxamide + (6S)-5,6,7,8-tetrahydrofolate. It catalyses the reaction IMP + H2O = 5-formamido-1-(5-phospho-D-ribosyl)imidazole-4-carboxamide. It participates in purine metabolism; IMP biosynthesis via de novo pathway; 5-formamido-1-(5-phospho-D-ribosyl)imidazole-4-carboxamide from 5-amino-1-(5-phospho-D-ribosyl)imidazole-4-carboxamide (10-formyl THF route): step 1/1. It functions in the pathway purine metabolism; IMP biosynthesis via de novo pathway; IMP from 5-formamido-1-(5-phospho-D-ribosyl)imidazole-4-carboxamide: step 1/1. The protein is Bifunctional purine biosynthesis protein PurH of Streptococcus pneumoniae (strain Taiwan19F-14).